Reading from the N-terminus, the 302-residue chain is S-crystallin SL4 (302 aa).

A run of 3 repeats spans residues 45-54, 55-64, and 65-74. The 4 X approximate tandem repeats of G-G-Y-[AYP]-V-[QK]-[SG]-R-G-D stretch occupies residues 45-84; sequence GGYAVQSRGDGGYYVKSRGDGGYPVQGRGDTGYSSQTRSD. 3 short sequence motifs (cell attachment site) span residues 52-54, 62-64, and 72-74; these read RGD. The disordered stretch occupies residues 68-92; the sequence is PVQGRGDTGYSSQTRSDDACLGQGR. One copy of the 4; approximate repeat lies at 75–84; the sequence is TGYSSQTRSD. The Cell attachment site signature appears at 113 to 115; the sequence is RGD. Residues 118 to 205 form a disordered region; it reads SDINSGLYSG…ESASRRSRNH (88 aa). Basic and acidic residues-rich tracts occupy residues 129–166 and 177–192; these read RMDDSCHTSESRRMDDPCGTDESRRLDVPCHSDDHYRS and AEDRRGGHSDSHRIDI. The GST C-terminal domain occupies 183-302; sequence GHSDSHRIDI…YIKRRYQSDF (120 aa).

It belongs to the GST superfamily.

Functionally, S-crystallins are structural components of squids and octopi eye lens. The sequence is that of S-crystallin SL4 from Nototodarus sloanii (Wellington flying squid).